Consider the following 215-residue polypeptide: Tail hub protein A (215 aa).

As to quaternary structure, heterotrimer with THB. The heterotrimers further assemble as 12 docking hubs that anchor the trimeric tail fibers.

The protein resides in the virion. Forms the tail hub together with tail hub protein B (THB). The protein is Tail hub protein A of Bacteroides phage crAss001 (Bacteroides phage PhiCrAss001).